Here is a 101-residue protein sequence, read N- to C-terminus: Large ribosomal subunit protein uL24 (101 aa).

Belongs to the universal ribosomal protein uL24 family. In terms of assembly, part of the 50S ribosomal subunit.

One of two assembly initiator proteins, it binds directly to the 5'-end of the 23S rRNA, where it nucleates assembly of the 50S subunit. Functionally, one of the proteins that surrounds the polypeptide exit tunnel on the outside of the subunit. The protein is Large ribosomal subunit protein uL24 of Streptococcus thermophilus (strain ATCC BAA-491 / LMD-9).